The primary structure comprises 256 residues: Ras-related protein Rab-26 (256 aa).

The segment at 1–53 is disordered; sequence MSRKKTPKSKAGSAPATSALPAANGPRPVRPGTARPGPEAPPNGPPQPGRSSV. The segment covering 38-48 has biased composition (pro residues); the sequence is PEAPPNGPPQP. Residues S72, G73, V74, G75, K76, T77, C78, S95, and T96 each coordinate GTP. T77 is a binding site for Mg(2+). Short sequence motifs (switch) lie at residues 86-101 and 119-136; these read GAFL…GIDF and DTAG…YYRD. Positions 96 and 119 each coordinate Mg(2+). Positions 122, 177, 178, 180, 208, and 209 each coordinate GTP. Residues C253 and C254 are each lipidated (S-geranylgeranyl cysteine).

This sequence belongs to the small GTPase superfamily. Rab family. Requires Mg(2+) as cofactor.

Its subcellular location is the cell membrane. The enzyme catalyses GTP + H2O = GDP + phosphate + H(+). With respect to regulation, regulated by guanine nucleotide exchange factors (GEFs) which promote the exchange of bound GDP for free GTP. Regulated by GTPase activating proteins (GAPs) which increase the GTP hydrolysis activity. Inhibited by GDP dissociation inhibitors (GDIs). Functionally, the small GTPases Rab are key regulators of intracellular membrane trafficking, from the formation of transport vesicles to their fusion with membranes. Rabs cycle between an inactive GDP-bound form and an active GTP-bound form that is able to recruit to membranes different set of downstream effectors directly responsible for vesicle formation, movement, tethering and fusion. RAB26 mediates transport of ADRA2A and ADRA2B from the Golgi to the cell membrane. Plays a role in the maturation of zymogenic granules and in pepsinogen secretion in the stomach. Plays a role in the secretion of amylase from acinar granules in the parotid gland. In Bos taurus (Bovine), this protein is Ras-related protein Rab-26 (RAB26).